The primary structure comprises 520 residues: Ribonuclease Y (520 aa).

The chain crosses the membrane as a helical span at residues 5–25 (ITIISSLLFLIVGLVVGSLIF). Residues 70-127 (RTEIENELRGRRTETQKAENRLLQREENLDRKDTSLSKREATLERKEESISKRQQQIE) form a disordered region. One can recognise a KH domain in the interval 210–273 (TVSVVTLPND…EIARIALEKL (64 aa)). Residues 336-429 (VLNHSLEVSK…VAAADALSAA (94 aa)) form the HD domain.

Belongs to the RNase Y family.

The protein resides in the cell membrane. Its function is as follows. Endoribonuclease that initiates mRNA decay. The chain is Ribonuclease Y from Listeria welshimeri serovar 6b (strain ATCC 35897 / DSM 20650 / CCUG 15529 / CIP 8149 / NCTC 11857 / SLCC 5334 / V8).